A 556-amino-acid polypeptide reads, in one-letter code: Formate--tetrahydrofolate ligase (556 aa).

Position 65–72 (65–72 (TAAGEGKS)) interacts with ATP.

Belongs to the formate--tetrahydrofolate ligase family.

The enzyme catalyses (6S)-5,6,7,8-tetrahydrofolate + formate + ATP = (6R)-10-formyltetrahydrofolate + ADP + phosphate. The protein operates within one-carbon metabolism; tetrahydrofolate interconversion. The protein is Formate--tetrahydrofolate ligase of Elusimicrobium minutum (strain Pei191).